A 163-amino-acid polypeptide reads, in one-letter code: Putative 4-hydroxy-4-methyl-2-oxoglutarate aldolase (163 aa).

Substrate is bound by residues 76–79 (GDMI) and R98. An a divalent metal cation-binding site is contributed by D99.

The protein belongs to the class II aldolase/RraA-like family. As to quaternary structure, homotrimer. A divalent metal cation serves as cofactor.

The enzyme catalyses 4-hydroxy-4-methyl-2-oxoglutarate = 2 pyruvate. It carries out the reaction oxaloacetate + H(+) = pyruvate + CO2. Catalyzes the aldol cleavage of 4-hydroxy-4-methyl-2-oxoglutarate (HMG) into 2 molecules of pyruvate. Also contains a secondary oxaloacetate (OAA) decarboxylase activity due to the common pyruvate enolate transition state formed following C-C bond cleavage in the retro-aldol and decarboxylation reactions. The sequence is that of Putative 4-hydroxy-4-methyl-2-oxoglutarate aldolase from Pseudomonas fluorescens.